A 310-amino-acid polypeptide reads, in one-letter code: Carbamate kinase 1 (310 aa).

This sequence belongs to the carbamate kinase family.

The protein localises to the cytoplasm. It catalyses the reaction hydrogencarbonate + NH4(+) + ATP = carbamoyl phosphate + ADP + H2O + H(+). It functions in the pathway metabolic intermediate metabolism; carbamoyl phosphate degradation; CO(2) and NH(3) from carbamoyl phosphate: step 1/1. The polypeptide is Carbamate kinase 1 (arcC1) (Staphylococcus aureus (strain bovine RF122 / ET3-1)).